A 3584-amino-acid polypeptide reads, in one-letter code: D-lysergyl-peptide-synthetase subunit 1 (3584 aa).

A disordered region spans residues 25–44; sequence IESINGDKNKSERHTASSSA. Over residues 29–39 the composition is skewed to basic and acidic residues; it reads NGDKNKSERHT. The tract at residues 307 to 706 is adenylation (A) domain 1; the sequence is SCCSRPNSQA…LGRKDDQVKI (400 aa). Positions 848 to 917 constitute a Carrier 1 domain; sequence REKLLQALFA…TLREIVIVST (70 aa). Position 880 is an O-(pantetheine 4'-phosphoryl)serine (Ser880). The condensation (C) domain 1 stretch occupies residues 962 to 1353; it reads EDIYPCTHLQ…EHILTQIHSN (392 aa). An adenylation (A) domain 2 region spans residues 1396-1803; it reads QAKCQAQPDA…RRKDAQVKIR (408 aa). The region spanning 1948 to 2016 is the Carrier 2 domain; it reads TEHEISAIWA…TIRKLALARG (69 aa). Ser1980 carries the O-(pantetheine 4'-phosphoryl)serine modification. The segment at 2066–2483 is condensation (C) domain 2; it reads ERIYPCSPIQ…ALPVLDEDQM (418 aa). The tract at residues 2508–2906 is adenylation (A) domain 3; that stretch reads QCIRCPDSPS…GRNDDQVKVR (399 aa). The 69-residue stretch at 3041-3109 folds into the Carrier 3 domain; it reads MEAELQQLVG…RLSDLARIVE (69 aa). Ser3073 is modified (O-(pantetheine 4'-phosphoryl)serine). The interval 3174–3472 is cyclization (Cyc) domain; sequence LYFSKPMASE…VAKSTTWSSD (299 aa).

Belongs to the NRP synthetase family.

Its pathway is alkaloid biosynthesis; ergot alkaloid biosynthesis. In terms of biological role, D-lysergyl-peptide-synthetase subunit 1; part of the gene cluster that mediates the biosynthesis of fungal ergot alkaloid. DmaW catalyzes the first step of ergot alkaloid biosynthesis by condensing dimethylallyl diphosphate (DMAP) and tryptophan to form 4-dimethylallyl-L-tryptophan. The second step is catalyzed by the methyltransferase easF that methylates 4-dimethylallyl-L-tryptophan in the presence of S-adenosyl-L-methionine, resulting in the formation of 4-dimethylallyl-L-abrine. The catalase easC and the FAD-dependent oxidoreductase easE then transform 4-dimethylallyl-L-abrine to chanoclavine-I which is further oxidized by easD in the presence of NAD(+), resulting in the formation of chanoclavine-I aldehyde. Agroclavine dehydrogenase easG then mediates the conversion of chanoclavine-I aldehyde to agroclavine via a non-enzymatic adduct reaction: the substrate is an iminium intermediate that is formed spontaneously from chanoclavine-I aldehyde in the presence of glutathione. The presence of easA is not required to complete this reaction. Further conversion of agroclavine to paspalic acid is a two-step process involving oxidation of agroclavine to elymoclavine and of elymoclavine to paspalic acid, the second step being performed by the elymoclavine oxidase cloA. Paspalic acid is then further converted to D-lysergic acid. Ergopeptines are assembled from D-lysergic acid and three different amino acids by the D-lysergyl-peptide-synthetases composed each of a monomudular and a trimodular nonribosomal peptide synthetase subunit. LpsB and lpsC encode the monomodular subunits responsible for D-lysergic acid activation and incorporation into the ergopeptine backbone. LpsA1 and A2 subunits encode the trimodular nonribosomal peptide synthetase assembling the tripeptide portion of ergopeptines. LpsA1 is responsible for formation of the major ergopeptine, ergotamine, and lpsA2 for alpha-ergocryptine, the minor ergopeptine of the total alkaloid mixture elaborated by C.purpurea. D-lysergyl-tripeptides are assembled by the nonribosomal peptide synthetases and released as N-(D-lysergyl-aminoacyl)-lactams. Cyclolization of the D-lysergyl-tripeptides is performed by the Fe(2+)/2-ketoglutarate-dependent dioxygenase easH which introduces a hydroxyl group into N-(D-lysergyl-aminoacyl)-lactam at alpha-C of the aminoacyl residue followed by spontaneous condensation with the terminal lactam carbonyl group. This chain is D-lysergyl-peptide-synthetase subunit 1, found in Claviceps purpurea (strain 20.1) (Ergot fungus).